The primary structure comprises 130 residues: ATP synthase epsilon chain (130 aa).

The protein belongs to the ATPase epsilon chain family. In terms of assembly, F-type ATPases have 2 components, CF(1) - the catalytic core - and CF(0) - the membrane proton channel. CF(1) has five subunits: alpha(3), beta(3), gamma(1), delta(1), epsilon(1). CF(0) has three main subunits: a, b and c.

Its subcellular location is the cell inner membrane. In terms of biological role, produces ATP from ADP in the presence of a proton gradient across the membrane. This is ATP synthase epsilon chain (atpC) from Fuscovulum blasticum (Rhodobacter blasticus).